We begin with the raw amino-acid sequence, 59 residues long: Large ribosomal subunit protein uL30 (59 aa).

Belongs to the universal ribosomal protein uL30 family. Part of the 50S ribosomal subunit.

This Clostridium botulinum (strain 657 / Type Ba4) protein is Large ribosomal subunit protein uL30.